Reading from the N-terminus, the 440-residue chain is Phosphoglycerate kinase, glycosomal (440 aa).

(2R)-3-phosphoglycerate contacts are provided by valine 23, aspartate 24, phenylalanine 25, asparagine 26, arginine 39, serine 61, histidine 62, glycine 64, arginine 65, arginine 135, histidine 171, and arginine 172. Glycine 217 provides a ligand contact to CDP. Residue alanine 218 coordinates ADP. 2 residues coordinate AMP: alanine 218 and lysine 219. Position 218 (alanine 218) interacts with ATP. Alanine 218 provides a ligand contact to Mg(2+). A (2R)-3-phosphoglycerate-binding site is contributed by lysine 219. Aspartate 222 contributes to the CDP binding site. Residue aspartate 222 participates in Mg(2+) binding. Residues lysine 223 and glycine 241 each coordinate ADP. Lysine 223 provides a ligand contact to AMP. Glycine 241 is a binding site for CDP. Positions 242 and 314 each coordinate AMP. 2 residues coordinate ATP: alanine 242 and alanine 314. Residues alanine 314 and asparagine 338 each coordinate ADP. Positions 339 and 344 each coordinate CDP. ADP is bound by residues phenylalanine 344, glutamate 345, aspartate 377, and serine 378. Glutamate 345 lines the AMP pocket. 2 residues coordinate ATP: aspartate 377 and serine 378. A Mg(2+)-binding site is contributed by aspartate 377.

The protein belongs to the phosphoglycerate kinase family. In terms of assembly, monomer. It depends on Mg(2+) as a cofactor.

It localises to the glycosome. It catalyses the reaction (2R)-3-phosphoglycerate + ATP = (2R)-3-phospho-glyceroyl phosphate + ADP. Its pathway is carbohydrate degradation; glycolysis; pyruvate from D-glyceraldehyde 3-phosphate: step 2/5. In Trypanosoma brucei brucei, this protein is Phosphoglycerate kinase, glycosomal.